A 91-amino-acid polypeptide reads, in one-letter code: Small ribosomal subunit protein uS19 (91 aa).

This sequence belongs to the universal ribosomal protein uS19 family.

Its function is as follows. Protein S19 forms a complex with S13 that binds strongly to the 16S ribosomal RNA. This is Small ribosomal subunit protein uS19 from Pseudomonas syringae pv. tomato (strain ATCC BAA-871 / DC3000).